The chain runs to 84 residues: U21-theraphotoxin-Cg1a 2 (84 aa).

An N-terminal signal peptide occupies residues 1–21 (MKVSVLITLAVLGVMFLFTSA). The propeptide occupies 22-47 (EERGSDQMDSPAWLKSMEIIFQSEER). Intrachain disulfides connect C49-C63, C56-C68, and C62-C76. Residue V82 is modified to Valine amide.

The protein belongs to the neurotoxin 10 (Hwtx-1) family. 05 (F4a) subfamily. As to expression, expressed by the venom gland.

The protein resides in the secreted. In terms of biological role, probable ion channel inhibitor. The polypeptide is U21-theraphotoxin-Cg1a 2 (Chilobrachys guangxiensis (Chinese earth tiger tarantula)).